Here is a 1574-residue protein sequence, read N- to C-terminus: Synaptojanin-1 (1574 aa).

The region spanning 119 to 442 (VRKVLNSGNF…GDSISKIYAG (324 aa)) is the SAC domain. Residues serine 820 and serine 830 each carry the phosphoserine modification. Positions 894–971 (GTVLVSIKSS…RTITITLKSP (78 aa)) constitute an RRM domain. Residues 1029 to 1054 (HLQPSSSSGLGTSPSSSPRTSPCQSP) are compositionally biased toward low complexity. The segment at 1029–1327 (HLQPSSSSGL…GVKQEPTLKS (299 aa)) is disordered. Serine 1053 bears the Phosphoserine mark. The span at 1080–1100 (SSQGSPVDTQPAAQKDSSQTL) shows a compositional bias: polar residues. Residues 1105–1127 (PPPPRPVAPPARPAPPQRPPPPS) are compositionally biased toward pro residues. Residues serine 1147 and serine 1175 each carry the phosphoserine modification. Arginine 1198 is subject to Omega-N-methylarginine. Threonine 1217 is subject to Phosphothreonine. Positions 1268–1287 (TMPPSGPQPNLETPPQPPPR) are enriched in pro residues. Low complexity predominate over residues 1288–1307 (SRSSQSLPSDSSPQLQQEQP). A phosphoserine mark is found at serine 1290 and serine 1350. A Phosphothreonine modification is found at threonine 1354. Disordered regions lie at residues 1363–1507 (LPSA…SVCP) and 1532–1574 (LPAR…FTER). 4 stretches are compositionally biased toward polar residues: residues 1364–1379 (PSAS…SVSC), 1393–1402 (QESMGSSANP), 1424–1436 (RVQS…TSWL), and 1472–1484 (DLQS…TSNP). Positions 1403–1425 (FPSLPCRNPFTDRTAAPGNPFRV) are 3 X 3 AA repeats of N-P-F. Over residues 1535–1548 (RRPPPPPPPVPLLP) the composition is skewed to pro residues. Residues 1549-1563 (PGTTSSAGPSTTLPS) are compositionally biased toward low complexity. A compositionally biased stretch (polar residues) spans 1565-1574 (APSTLDFTER).

The protein belongs to the synaptojanin family. This sequence in the central section; belongs to the inositol 1,4,5-trisphosphate 5-phosphatase family. Interacts with ASH/GRB2. Interacts with PACSIN1, PACSIN2 and PACSIN3. Interacts with AMPH, SH3GL1, SH3GL2 and SH3GL3. Interacts with MYO1E (via SH3 domain). Interacts with BIN1 and DNM1. Interacts with EPS15.

It localises to the cytoplasm. The protein localises to the perinuclear region. The catalysed reaction is a 1,2-diacyl-sn-glycero-3-phospho-(1D-myo-inositol-4,5-bisphosphate) + H2O = a 1,2-diacyl-sn-glycero-3-phospho-(1D-myo-inositol 4-phosphate) + phosphate. Functionally, phosphatase that acts on various phosphoinositides, including phosphatidylinositol 4-phosphate, phosphatidylinositol (4,5)-bisphosphate and phosphatidylinositol (3,4,5)-trisphosphate. Has a role in clathrin-mediated endocytosis. Hydrolyzes PIP2 bound to actin regulatory proteins resulting in the rearrangement of actin filaments downstream of tyrosine kinase and ASH/GRB2. The sequence is that of Synaptojanin-1 (Synj1) from Mus musculus (Mouse).